A 459-amino-acid polypeptide reads, in one-letter code: Bifunctional protein GlmU (459 aa).

Positions 1–229 are pyrophosphorylase; that stretch reads MSNFAIILAA…FDESLGVNDR (229 aa). UDP-N-acetyl-alpha-D-glucosamine-binding positions include 8 to 11, lysine 22, glutamine 72, and 77 to 78; these read LAAG and GT. Residue aspartate 102 participates in Mg(2+) binding. UDP-N-acetyl-alpha-D-glucosamine-binding residues include glycine 139, glutamate 154, asparagine 169, and asparagine 227. A Mg(2+)-binding site is contributed by asparagine 227. Residues 230 to 250 form a linker region; sequence VALATAESVMRRRINHKHMVN. An N-acetyltransferase region spans residues 251–459; sequence GVSFVNPEAT…TRLPHHPKNQ (209 aa). UDP-N-acetyl-alpha-D-glucosamine is bound by residues arginine 332 and lysine 350. Catalysis depends on histidine 362, which acts as the Proton acceptor. UDP-N-acetyl-alpha-D-glucosamine is bound by residues tyrosine 365 and asparagine 376. Acetyl-CoA-binding positions include alanine 379, 385–386, serine 404, alanine 422, and arginine 439; that span reads NY.

In the N-terminal section; belongs to the N-acetylglucosamine-1-phosphate uridyltransferase family. It in the C-terminal section; belongs to the transferase hexapeptide repeat family. Homotrimer. Requires Mg(2+) as cofactor.

It localises to the cytoplasm. It carries out the reaction alpha-D-glucosamine 1-phosphate + acetyl-CoA = N-acetyl-alpha-D-glucosamine 1-phosphate + CoA + H(+). It catalyses the reaction N-acetyl-alpha-D-glucosamine 1-phosphate + UTP + H(+) = UDP-N-acetyl-alpha-D-glucosamine + diphosphate. It participates in nucleotide-sugar biosynthesis; UDP-N-acetyl-alpha-D-glucosamine biosynthesis; N-acetyl-alpha-D-glucosamine 1-phosphate from alpha-D-glucosamine 6-phosphate (route II): step 2/2. Its pathway is nucleotide-sugar biosynthesis; UDP-N-acetyl-alpha-D-glucosamine biosynthesis; UDP-N-acetyl-alpha-D-glucosamine from N-acetyl-alpha-D-glucosamine 1-phosphate: step 1/1. It functions in the pathway bacterial outer membrane biogenesis; LPS lipid A biosynthesis. Functionally, catalyzes the last two sequential reactions in the de novo biosynthetic pathway for UDP-N-acetylglucosamine (UDP-GlcNAc). The C-terminal domain catalyzes the transfer of acetyl group from acetyl coenzyme A to glucosamine-1-phosphate (GlcN-1-P) to produce N-acetylglucosamine-1-phosphate (GlcNAc-1-P), which is converted into UDP-GlcNAc by the transfer of uridine 5-monophosphate (from uridine 5-triphosphate), a reaction catalyzed by the N-terminal domain. This Streptococcus pneumoniae serotype 2 (strain D39 / NCTC 7466) protein is Bifunctional protein GlmU.